Consider the following 840-residue polypeptide: Cytosolic carboxypeptidase 2 (840 aa).

A Peptidase M14 domain is found at 358–628 (YPYTYTDLQC…HVCDTLLDFC (271 aa)). H424, E427, and H520 together coordinate Zn(2+). Residue E592 is the Proton donor/acceptor of the active site. Over residues 706–719 (MFKKKKKKSLQTRK) the composition is skewed to basic residues. Disordered stretches follow at residues 706 to 726 (MFKK…EQYQ) and 758 to 789 (ESSS…LDPS).

Belongs to the peptidase M14 family. As to quaternary structure, interacts with RARRES1, KIF11 and MAPRE1. The cofactor is Zn(2+).

It localises to the cytoplasm. Its subcellular location is the cytosol. The protein localises to the cytoskeleton. It is found in the microtubule organizing center. The protein resides in the centrosome. It localises to the centriole. Its subcellular location is the cilium basal body. The enzyme catalyses (L-glutamyl)(n+1)-gamma-L-glutamyl-L-glutamyl-[protein] + H2O = (L-glutamyl)(n)-gamma-L-glutamyl-L-glutamyl-[protein] + L-glutamate. Its activity is regulated as follows. Inhibited by RARRES1. Metallocarboxypeptidase that mediates deglutamylation of tubulin and non-tubulin target proteins. Catalyzes the removal of polyglutamate side chains present on the gamma-carboxyl group of glutamate residues within the C-terminal tail of tubulin protein. Specifically cleaves tubulin long-side-chains, while it is not able to remove the branching point glutamate. Also catalyzes the removal of polyglutamate residues from the carboxy-terminus of non-tubulin proteins such as MYLK. In Macaca fascicularis (Crab-eating macaque), this protein is Cytosolic carboxypeptidase 2 (AGBL2).